Consider the following 89-residue polypeptide: Large ribosomal subunit protein bL27 (89 aa).

Residues 1-20 (MAHKKAGGSSRNGRDSIGRR) are disordered.

Belongs to the bacterial ribosomal protein bL27 family.

The protein is Large ribosomal subunit protein bL27 of Ruegeria pomeroyi (strain ATCC 700808 / DSM 15171 / DSS-3) (Silicibacter pomeroyi).